Reading from the N-terminus, the 140-residue chain is 3-hydroxyacyl-[acyl-carrier-protein] dehydratase FabZ (140 aa).

His-47 is a catalytic residue.

The protein belongs to the thioester dehydratase family. FabZ subfamily.

The protein resides in the cytoplasm. The enzyme catalyses a (3R)-hydroxyacyl-[ACP] = a (2E)-enoyl-[ACP] + H2O. Involved in unsaturated fatty acids biosynthesis. Catalyzes the dehydration of short chain beta-hydroxyacyl-ACPs and long chain saturated and unsaturated beta-hydroxyacyl-ACPs. The polypeptide is 3-hydroxyacyl-[acyl-carrier-protein] dehydratase FabZ (Streptococcus suis (strain 98HAH33)).